The sequence spans 215 residues: Histidine biosynthesis bifunctional protein HisIE (215 aa).

The interval 1–118 (MTKSISIEHL…YKNDVALLQI (118 aa)) is phosphoribosyl-AMP cyclohydrolase. Positions 119–215 (IPQVSAKIKE…HVEKEGQQRE (97 aa)) are phosphoribosyl-ATP pyrophosphohydrolase.

In the N-terminal section; belongs to the PRA-CH family. The protein in the C-terminal section; belongs to the PRA-PH family.

Its subcellular location is the cytoplasm. It carries out the reaction 1-(5-phospho-beta-D-ribosyl)-ATP + H2O = 1-(5-phospho-beta-D-ribosyl)-5'-AMP + diphosphate + H(+). The enzyme catalyses 1-(5-phospho-beta-D-ribosyl)-5'-AMP + H2O = 1-(5-phospho-beta-D-ribosyl)-5-[(5-phospho-beta-D-ribosylamino)methylideneamino]imidazole-4-carboxamide. It participates in amino-acid biosynthesis; L-histidine biosynthesis; L-histidine from 5-phospho-alpha-D-ribose 1-diphosphate: step 2/9. The protein operates within amino-acid biosynthesis; L-histidine biosynthesis; L-histidine from 5-phospho-alpha-D-ribose 1-diphosphate: step 3/9. This Oceanobacillus iheyensis (strain DSM 14371 / CIP 107618 / JCM 11309 / KCTC 3954 / HTE831) protein is Histidine biosynthesis bifunctional protein HisIE.